The following is a 118-amino-acid chain: uncharacterized protein (118 aa).

3 consecutive transmembrane segments (helical) span residues 20-39, 46-63, and 67-85; these read VEGP…LLWI, LVVV…GEAV, and LSLV…AMSG. The tract at residues 85–118 is disordered; that stretch reads GDKSKKKGKKQRSILKDADDWDDDSWDDEGDWDE. Basic residues predominate over residues 88-97; sequence SKKKGKKQRS. Over residues 103–118 the composition is skewed to acidic residues; the sequence is DDWDDDSWDDEGDWDE.

The protein resides in the cell membrane. This is an uncharacterized protein from Archaeoglobus fulgidus (strain ATCC 49558 / DSM 4304 / JCM 9628 / NBRC 100126 / VC-16).